Consider the following 464-residue polypeptide: Argininosuccinate lyase (464 aa).

Belongs to the lyase 1 family. Argininosuccinate lyase subfamily.

The protein resides in the cytoplasm. It carries out the reaction 2-(N(omega)-L-arginino)succinate = fumarate + L-arginine. The protein operates within amino-acid biosynthesis; L-arginine biosynthesis; L-arginine from L-ornithine and carbamoyl phosphate: step 3/3. The sequence is that of Argininosuccinate lyase from Pseudomonas aeruginosa (strain ATCC 15692 / DSM 22644 / CIP 104116 / JCM 14847 / LMG 12228 / 1C / PRS 101 / PAO1).